We begin with the raw amino-acid sequence, 132 residues long: Small ribosomal subunit protein uS8 (132 aa).

The protein belongs to the universal ribosomal protein uS8 family. In terms of assembly, part of the 30S ribosomal subunit. Contacts proteins S5 and S12.

One of the primary rRNA binding proteins, it binds directly to 16S rRNA central domain where it helps coordinate assembly of the platform of the 30S subunit. The chain is Small ribosomal subunit protein uS8 from Anaeromyxobacter dehalogenans (strain 2CP-C).